A 35-amino-acid chain; its full sequence is Non-specific lipid-transfer protein 1 (35 aa).

A disulfide bridge links Cys13 with Cys28.

As to expression, seeds.

Plant non-specific lipid-transfer proteins transfer phospholipids as well as galactolipids across membranes. May play a role in wax or cutin deposition in the cell walls of expanding epidermal cells and certain secretory tissues. Inhibits the growth of F.oxysporum and P.infestans. This Nigella sativa (Black cumin) protein is Non-specific lipid-transfer protein 1.